Consider the following 261-residue polypeptide: Putative cytochrome YdhU (261 aa).

A helical membrane pass occupies residues phenylalanine 25–glycine 45. Residue histidine 77 coordinates heme b. A run of 3 helical transmembrane segments spans residues alanine 81–alanine 101, valine 108–isoleucine 128, and valine 182–cysteine 202. Residue histidine 111 coordinates heme b. Histidine 223 and histidine 237 together coordinate heme b. The chain crosses the membrane as a helical span at residues phenylalanine 224–glycine 244. Histidine 237 contacts a menaquinone.

Belongs to the PhsC family. Requires heme as cofactor.

The protein localises to the cell inner membrane. This Escherichia coli (strain K12) protein is Putative cytochrome YdhU (ydhU).